The following is a 258-amino-acid chain: MTEAVQNVAQPQIEVENLNLWYGEKQALKNISMQIPKNSVTALIGPSGCGKSTFIRCLNRMNDLIKNCRIEGKVSIEDEDIYEKGVDVVELRKRVGMVFQKPNPFPMSIYDNIAYGPRIHGANKKDLGGIVEFALRSAALWNETSDRLKSTALSLSGGQQQRLCIARTLAVKPEIILFDEPCSALDPISTSRIEELIMNLKKDYTIVIVTHNMQQAARVSDYTGFFLMGELIEFGKTRQIFHNPKEQSTEDYITGRFG.

The 241-residue stretch at 13-253 (IEVENLNLWY…PKEQSTEDYI (241 aa)) folds into the ABC transporter domain. 45–52 (GPSGCGKS) contributes to the ATP binding site.

This sequence belongs to the ABC transporter superfamily. Phosphate importer (TC 3.A.1.7) family. The complex is composed of two ATP-binding proteins (PstB), two transmembrane proteins (PstC and PstA) and a solute-binding protein (PstS).

The protein localises to the cell membrane. The enzyme catalyses phosphate(out) + ATP + H2O = ADP + 2 phosphate(in) + H(+). Functionally, part of the ABC transporter complex PstSACB involved in phosphate import. Responsible for energy coupling to the transport system. This Methanosarcina acetivorans (strain ATCC 35395 / DSM 2834 / JCM 12185 / C2A) protein is Phosphate import ATP-binding protein PstB.